Consider the following 334-residue polypeptide: Homoserine O-acetyltransferase (334 aa).

An AB hydrolase-1 domain is found at 61–318 (LVLHALTGDS…GSIHGHDAFL (258 aa)). The Nucleophile role is filled by S148. R205 is a binding site for substrate. Catalysis depends on residues D285 and H314. D315 is a binding site for substrate.

The protein belongs to the AB hydrolase superfamily. MetX family. In terms of assembly, homodimer.

It is found in the cytoplasm. It carries out the reaction L-homoserine + acetyl-CoA = O-acetyl-L-homoserine + CoA. It participates in amino-acid biosynthesis; L-methionine biosynthesis via de novo pathway; O-acetyl-L-homoserine from L-homoserine: step 1/1. In terms of biological role, transfers an acetyl group from acetyl-CoA to L-homoserine, forming acetyl-L-homoserine. This chain is Homoserine O-acetyltransferase, found in Deinococcus radiodurans (strain ATCC 13939 / DSM 20539 / JCM 16871 / CCUG 27074 / LMG 4051 / NBRC 15346 / NCIMB 9279 / VKM B-1422 / R1).